The primary structure comprises 318 residues: Malate dehydrogenase (318 aa).

NAD(+)-binding positions include 10–15 and D34; that span reads GGGQIG. Residues R83 and R89 each contribute to the substrate site. NAD(+) is bound by residues N96 and 119 to 121; that span reads ISN. Substrate-binding residues include N121 and R152. Catalysis depends on H176, which acts as the Proton acceptor.

Belongs to the LDH/MDH superfamily. MDH type 3 family.

The enzyme catalyses (S)-malate + NAD(+) = oxaloacetate + NADH + H(+). In terms of biological role, catalyzes the reversible oxidation of malate to oxaloacetate. This is Malate dehydrogenase from Geotalea daltonii (strain DSM 22248 / JCM 15807 / FRC-32) (Geobacter daltonii).